Reading from the N-terminus, the 623-residue chain is Kelch-like protein diablo (623 aa).

The segment at 1–54 (MGDLPGSGSTAQPRDAAVTGTGGNSTAGGGSSVGSTAVDRPPSPARLSHTSEKH) is disordered. Thr-19 is modified (phosphothreonine). The span at 20–32 (GTGGNSTAGGGSS) shows a compositional bias: gly residues. Residues 72 to 139 (CDVVLNVGGR…CYTAHIMVEE (68 aa)) enclose the BTB domain. The 103-residue stretch at 174-276 (CLGIRAFADT…SPKFLVGTVG (103 aa)) folds into the BACK domain. 6 Kelch repeats span residues 323–369 (VLFA…VLND), 371–417 (LYAV…VLDG), 418–464 (FLYA…VLGG), 466–511 (LYAI…VFNN), 513–558 (IYAV…VVNG), and 559–605 (QLYA…VMRA).

The protein operates within protein modification; protein ubiquitination. Its function is as follows. Probable substrate-specific adapter of an E3 ubiquitin-protein ligase complex which mediates the ubiquitination and subsequent proteasomal degradation of target proteins. May have a role in synapse differentiation and growth. The chain is Kelch-like protein diablo from Drosophila erecta (Fruit fly).